The following is a 178-amino-acid chain: ATP synthase subunit delta (178 aa).

This sequence belongs to the ATPase delta chain family. F-type ATPases have 2 components, F(1) - the catalytic core - and F(0) - the membrane proton channel. F(1) has five subunits: alpha(3), beta(3), gamma(1), delta(1), epsilon(1). F(0) has three main subunits: a(1), b(2) and c(10-14). The alpha and beta chains form an alternating ring which encloses part of the gamma chain. F(1) is attached to F(0) by a central stalk formed by the gamma and epsilon chains, while a peripheral stalk is formed by the delta and b chains.

Its subcellular location is the cell membrane. In terms of biological role, f(1)F(0) ATP synthase produces ATP from ADP in the presence of a proton or sodium gradient. F-type ATPases consist of two structural domains, F(1) containing the extramembraneous catalytic core and F(0) containing the membrane proton channel, linked together by a central stalk and a peripheral stalk. During catalysis, ATP synthesis in the catalytic domain of F(1) is coupled via a rotary mechanism of the central stalk subunits to proton translocation. Its function is as follows. This protein is part of the stalk that links CF(0) to CF(1). It either transmits conformational changes from CF(0) to CF(1) or is implicated in proton conduction. This is ATP synthase subunit delta from Lysinibacillus sphaericus (strain C3-41).